A 298-amino-acid chain; its full sequence is Protease HtpX (298 aa).

The next 2 membrane-spanning stretches (helical) occupy residues 4 to 24 (IALYLLTNLAVIVVASITLSL) and 41 to 61 (TSLLIFSAVFGFAGSLISLLI). Histidine 147 is a Zn(2+) binding site. The active site involves glutamate 148. Residue histidine 151 participates in Zn(2+) binding. A run of 2 helical transmembrane segments spans residues 162 to 182 (LIQGVVNTFVIFAARVVGYVI) and 193 to 213 (GLGFGYYIVVIVTEIIFGIAA). Glutamate 225 contributes to the Zn(2+) binding site.

This sequence belongs to the peptidase M48B family. It depends on Zn(2+) as a cofactor.

The protein resides in the cell inner membrane. The protein is Protease HtpX of Alcanivorax borkumensis (strain ATCC 700651 / DSM 11573 / NCIMB 13689 / SK2).